Here is a 154-residue protein sequence, read N- to C-terminus: UPF0178 protein GDI0551/Gdia_1457 (154 aa).

Belongs to the UPF0178 family.

The chain is UPF0178 protein GDI0551/Gdia_1457 from Gluconacetobacter diazotrophicus (strain ATCC 49037 / DSM 5601 / CCUG 37298 / CIP 103539 / LMG 7603 / PAl5).